A 474-amino-acid polypeptide reads, in one-letter code: Glutamate--tRNA ligase (474 aa).

Residues 9 to 19 (PSPTGYLHVGG) carry the 'HIGH' region motif. The 'KMSKS' region motif lies at 240-244 (KLSKR). Lysine 243 contributes to the ATP binding site.

The protein belongs to the class-I aminoacyl-tRNA synthetase family. Glutamate--tRNA ligase type 1 subfamily. Monomer.

The protein resides in the cytoplasm. The enzyme catalyses tRNA(Glu) + L-glutamate + ATP = L-glutamyl-tRNA(Glu) + AMP + diphosphate. Catalyzes the attachment of glutamate to tRNA(Glu) in a two-step reaction: glutamate is first activated by ATP to form Glu-AMP and then transferred to the acceptor end of tRNA(Glu). This Vibrio vulnificus (strain CMCP6) protein is Glutamate--tRNA ligase.